The sequence spans 308 residues: Ava biosynthesis cluster protein O (308 aa).

Its pathway is secondary metabolite biosynthesis. Functionally, part of the cluster that mediates the biosynthesis of a highly modified cyclo-arginine-tryptophan dipeptide (cRW). The first step of the pathway is perfornmed by the arginine-containing cyclodipeptide synthase (RCPDS) avaA that acts as the scaffold-generating enzyme and is responsible for formation of the cyclo-Arg-Trp (cRW) diketopiperazine. AvaB then acts as a multifunctional flavoenzyme that is responsible for generating the cyclo-Arg-formylkynurenine DKP, which can be deformylated by avaC. AvaB then further catalyzes an additional N-oxidation followed by cyclization and dehydration. The next step is an N-acetylation of the guanidine group catalyzed by the arginine N-acetyltransferase avaD. The roles of the additional enzymes identified within the ava cluster still have to be determined. This is Ava biosynthesis cluster protein O from Aspergillus versicolor.